A 107-amino-acid polypeptide reads, in one-letter code: Small ribosomal subunit protein uS17 (107 aa).

It belongs to the universal ribosomal protein uS17 family. As to quaternary structure, part of the 30S ribosomal subunit.

Functionally, one of the primary rRNA binding proteins, it binds specifically to the 5'-end of 16S ribosomal RNA. In Thermotoga petrophila (strain ATCC BAA-488 / DSM 13995 / JCM 10881 / RKU-1), this protein is Small ribosomal subunit protein uS17.